An 800-amino-acid chain; its full sequence is Ent-copalyl diphosphate synthase 2 (800 aa).

Residues 52-80 form a disordered region; the sequence is QGQETRERRQLDDDEHARPPQGGDDDVAA. Over residues 55 to 69 the composition is skewed to basic and acidic residues; sequence ETRERRQLDDDEHAR. Substrate is bound at residue lysine 242. Mg(2+) contacts are provided by aspartate 374 and aspartate 376. The short motif at 374–377 is the DXDD motif element; it reads DIDD. Substrate is bound at residue lysine 461.

Belongs to the terpene synthase family. The cofactor is Mg(2+).

The catalysed reaction is (2E,6E,10E)-geranylgeranyl diphosphate = ent-copalyl diphosphate. Its function is as follows. Catalyzes the conversion of geranylgeranyl diphosphate to the phytoalexin precursor ent-copalyl diphosphate. The chain is Ent-copalyl diphosphate synthase 2 (CPS2) from Oryza sativa subsp. indica (Rice).